The chain runs to 241 residues: NLP effector protein 7 (241 aa).

An N-terminal signal peptide occupies residues 1 to 19 (MHLCALLIAAAGVLASVRA). Residues 105–115 (AIMYAWYFPKA) carry the Conserved undecapeptide motif motif. Positions 125-131 (GSRHYWL) match the Conserved heptapeptide motif motif. A glycan (N-linked (GlcNAc...) asparagine) is linked at Asn144.

This sequence belongs to the Necrosis inducing protein (NPP1) family.

The protein localises to the secreted. Its function is as follows. Secreted effector that acts as a pathogen-associated molecular pattern (PAMP) recognized by the plant immune system. Induces necrosis in Nicotiana benthamiana leaves and can induce Phytophthora capsici resistance in Nicotiana benthamiana. Also significantly improves disease resistance of Arabidopsis thaliana to Hyaloperonospora arabidopsidis. causes an inhibition of plant growth which is typically associated with enhanced immunity when over-expressed in Arabidopsis. The chain is NLP effector protein 7 from Plasmopara viticola (Downy mildew of grapevine).